Consider the following 253-residue polypeptide: Imidazole glycerol phosphate synthase subunit HisF (253 aa).

Catalysis depends on residues Asp11 and Asp130.

This sequence belongs to the HisA/HisF family. In terms of assembly, heterodimer of HisH and HisF.

It is found in the cytoplasm. It catalyses the reaction 5-[(5-phospho-1-deoxy-D-ribulos-1-ylimino)methylamino]-1-(5-phospho-beta-D-ribosyl)imidazole-4-carboxamide + L-glutamine = D-erythro-1-(imidazol-4-yl)glycerol 3-phosphate + 5-amino-1-(5-phospho-beta-D-ribosyl)imidazole-4-carboxamide + L-glutamate + H(+). The protein operates within amino-acid biosynthesis; L-histidine biosynthesis; L-histidine from 5-phospho-alpha-D-ribose 1-diphosphate: step 5/9. IGPS catalyzes the conversion of PRFAR and glutamine to IGP, AICAR and glutamate. The HisF subunit catalyzes the cyclization activity that produces IGP and AICAR from PRFAR using the ammonia provided by the HisH subunit. The chain is Imidazole glycerol phosphate synthase subunit HisF from Geotalea uraniireducens (strain Rf4) (Geobacter uraniireducens).